The sequence spans 487 residues: UDP-N-acetylmuramate--L-alanine ligase (487 aa).

ATP is bound at residue Gly130–Thr136.

This sequence belongs to the MurCDEF family.

The protein localises to the cytoplasm. The enzyme catalyses UDP-N-acetyl-alpha-D-muramate + L-alanine + ATP = UDP-N-acetyl-alpha-D-muramoyl-L-alanine + ADP + phosphate + H(+). The protein operates within cell wall biogenesis; peptidoglycan biosynthesis. In terms of biological role, cell wall formation. This chain is UDP-N-acetylmuramate--L-alanine ligase, found in Photobacterium profundum (strain SS9).